Here is an 83-residue protein sequence, read N- to C-terminus: Putative membrane protein insertion efficiency factor (83 aa).

This sequence belongs to the UPF0161 family.

It localises to the cell membrane. Its function is as follows. Could be involved in insertion of integral membrane proteins into the membrane. The protein is Putative membrane protein insertion efficiency factor of Streptococcus thermophilus (strain ATCC BAA-250 / LMG 18311).